A 278-amino-acid chain; its full sequence is 4-deoxy-L-threo-5-hexosulose-uronate ketol-isomerase (278 aa).

Zn(2+) contacts are provided by histidine 196, histidine 198, glutamate 203, and histidine 245.

This sequence belongs to the KduI family. Zn(2+) is required as a cofactor.

The enzyme catalyses 5-dehydro-4-deoxy-D-glucuronate = 3-deoxy-D-glycero-2,5-hexodiulosonate. Its pathway is glycan metabolism; pectin degradation; 2-dehydro-3-deoxy-D-gluconate from pectin: step 4/5. In terms of biological role, catalyzes the isomerization of 5-dehydro-4-deoxy-D-glucuronate to 3-deoxy-D-glycero-2,5-hexodiulosonate. In Burkholderia cenocepacia (strain ATCC BAA-245 / DSM 16553 / LMG 16656 / NCTC 13227 / J2315 / CF5610) (Burkholderia cepacia (strain J2315)), this protein is 4-deoxy-L-threo-5-hexosulose-uronate ketol-isomerase.